Here is a 103-residue protein sequence, read N- to C-terminus: Cytotoxin-like protein TA-BMBGT3 (103 aa).

The first 21 residues, 1–21 (MKTLLLTLVVVTIICLDLGYT), serve as a signal peptide directing secretion. Cystine bridges form between Cys24-Cys45, Cys27-Cys37, Cys38-Cys72, Cys76-Cys90, and Cys91-Cys96.

This sequence belongs to the three-finger toxin family. Ancestral subfamily. Orphan group XVII sub-subfamily. As to expression, expressed by the venom gland.

It localises to the secreted. This Bungarus multicinctus (Many-banded krait) protein is Cytotoxin-like protein TA-BMBGT3.